Reading from the N-terminus, the 341-residue chain is Phosphoribosylformylglycinamidine cyclo-ligase (341 aa).

Belongs to the AIR synthase family.

Its subcellular location is the cytoplasm. The enzyme catalyses 2-formamido-N(1)-(5-O-phospho-beta-D-ribosyl)acetamidine + ATP = 5-amino-1-(5-phospho-beta-D-ribosyl)imidazole + ADP + phosphate + H(+). Its pathway is purine metabolism; IMP biosynthesis via de novo pathway; 5-amino-1-(5-phospho-D-ribosyl)imidazole from N(2)-formyl-N(1)-(5-phospho-D-ribosyl)glycinamide: step 2/2. This Agathobacter rectalis (strain ATCC 33656 / DSM 3377 / JCM 17463 / KCTC 5835 / VPI 0990) (Eubacterium rectale) protein is Phosphoribosylformylglycinamidine cyclo-ligase.